The following is a 394-amino-acid chain: Protein arginine N-methyltransferase 8 (394 aa).

Residue G2 is the site of N-myristoyl glycine attachment. Residues 21-40 (VESTEVSSAPPQPPQPVIPA) are disordered. Short sequence motifs (SH3-binding) lie at residues 29 to 42 (APPQ…PAKP) and 53 to 58 (PSCPGR). A compositionally biased stretch (pro residues) spans 30 to 39 (PPQPPQPVIP). The residue at position 58 (R58) is an Omega-N-methylarginine; by PRMT8. R73 carries the asymmetric dimethylarginine; by PRMT8 modification. Residues 73–394 (RDYYFDSYAH…TSVSNDYKMR (322 aa)) form the SAM-dependent MTase PRMT-type domain. S-adenosyl-L-methionine contacts are provided by residues H86, R95, G119, 119–122 (GSGT), E141, and E170. Active-site residues include E185 and E194.

This sequence belongs to the class I-like SAM-binding methyltransferase superfamily. Protein arginine N-methyltransferase family. PRMT8 subfamily. In terms of assembly, homodimer. Tetramer; individual homodimers associates to form a homotetramer. Homooctamer; individual homodimers associates to form a homooctamer and homooligomerization is required for proper localization to the cell membrane. Heterodimer with PRMT1; heterodimerization may recruit PRMT1 activity to the plasma membrane. Interacts with PRMT2 (via the SH3 domain). Interacts with FYN (via the SH3 domain). Interacts with EWS; independently of EWS methylation status. Brain-specific. Only expressed in neurons, especially in the somatosensory and limbic systems, and a part of motor system. Highly expressed in all of the regions related to general somatosensory system. Expressed in most of the relay nuclei intervening the special somatosensory system, such as the auditory, visual and vestibular systems. Also present in forebrain limbic areas and thalamic nuclei relevant to limbic areas and in areas related to the motor system, such as the caudate putamen, Purkinje cells, inferior olivary nucleus and cerebellar nuclei.

Its subcellular location is the cell membrane. The catalysed reaction is L-arginyl-[protein] + S-adenosyl-L-methionine = N(omega)-methyl-L-arginyl-[protein] + S-adenosyl-L-homocysteine + H(+). It carries out the reaction L-arginyl-[protein] + 2 S-adenosyl-L-methionine = N(omega),N(omega)-dimethyl-L-arginyl-[protein] + 2 S-adenosyl-L-homocysteine + 2 H(+). In terms of biological role, S-adenosyl-L-methionine-dependent and membrane-associated arginine methyltransferase that can both catalyze the formation of omega-N monomethylarginine (MMA) and asymmetrical dimethylarginine (aDMA) in proteins such as NIFK, myelin basic protein, histone H4, H2A and H2A/H2B dimer. Able to mono- and dimethylate EWS protein; however its precise role toward EWS remains unclear as it still interacts with fully methylated EWS. This chain is Protein arginine N-methyltransferase 8, found in Mus musculus (Mouse).